Here is a 126-residue protein sequence, read N- to C-terminus: Plastocyanin (126 aa).

Positions 1–28 (MSKKFLTILAGLLLVVSSFFLSVSPAAA) are cleaved as a signal peptide. The Plastocyanin-like domain occupies 29–126 (ANATVKMGSD…AGMVGKVVVE (98 aa)). The Cu cation site is built by histidine 67, cysteine 111, histidine 114, and methionine 119.

The protein belongs to the plastocyanin family. Cu(2+) is required as a cofactor.

It is found in the cellular thylakoid membrane. Its function is as follows. Participates in electron transfer between P700 and the cytochrome b6-f complex in photosystem I. The sequence is that of Plastocyanin (petE) from Synechocystis sp. (strain ATCC 27184 / PCC 6803 / Kazusa).